We begin with the raw amino-acid sequence, 179 residues long: Putative BPIFA4P protein (179 aa).

A signal peptide spans 1–20 (MLNVSGLFVLLCGLLVSSSA).

This sequence belongs to the BPI/LBP/Plunc superfamily. Plunc family. In terms of tissue distribution, expressed in breast cancer and salivary gland.

The protein resides in the secreted. Functionally, major protein in sweat, has surfactant properties. This is Putative BPIFA4P protein (BPIFA4P) from Homo sapiens (Human).